The chain runs to 202 residues: Probable chemoreceptor glutamine deamidase CheD 2 (202 aa).

This sequence belongs to the CheD family.

It catalyses the reaction L-glutaminyl-[protein] + H2O = L-glutamyl-[protein] + NH4(+). Functionally, probably deamidates glutamine residues to glutamate on methyl-accepting chemotaxis receptors (MCPs), playing an important role in chemotaxis. The chain is Probable chemoreceptor glutamine deamidase CheD 2 from Shewanella oneidensis (strain ATCC 700550 / JCM 31522 / CIP 106686 / LMG 19005 / NCIMB 14063 / MR-1).